Reading from the N-terminus, the 364-residue chain is Heme A synthase (364 aa).

A run of 8 helical transmembrane segments spans residues 25-45 (ALRL…LVGG), 111-131 (FLAR…WATG), 139-159 (WPLV…WWMV), 174-194 (LATH…VMRG), 212-232 (AIAL…VAGL), 270-290 (VQFV…YHMV), 305-325 (SVVL…ALLL), and 327-347 (VPLD…GFTV). His-274 serves as a coordination point for heme. His-335 is a heme binding site.

It belongs to the COX15/CtaA family. Type 2 subfamily. In terms of assembly, interacts with CtaB. Heme b serves as cofactor.

It is found in the cell membrane. It carries out the reaction Fe(II)-heme o + 2 A + H2O = Fe(II)-heme a + 2 AH2. It participates in porphyrin-containing compound metabolism; heme A biosynthesis; heme A from heme O: step 1/1. Functionally, catalyzes the conversion of heme O to heme A by two successive hydroxylations of the methyl group at C8. The first hydroxylation forms heme I, the second hydroxylation results in an unstable dihydroxymethyl group, which spontaneously dehydrates, resulting in the formyl group of heme A. This is Heme A synthase from Allorhizobium ampelinum (strain ATCC BAA-846 / DSM 112012 / S4) (Agrobacterium vitis (strain S4)).